A 211-amino-acid polypeptide reads, in one-letter code: Large ribosomal subunit protein uL4 (211 aa).

Residues 44 to 90 are disordered; the sequence is ERQGTHSTLTKGEVRGGGKKPWRQKHTGKARTGSTRNPHWTGGGVVF. Over residues 60 to 72 the composition is skewed to basic residues; that stretch reads GGKKPWRQKHTGK.

This sequence belongs to the universal ribosomal protein uL4 family. Part of the 50S ribosomal subunit.

In terms of biological role, one of the primary rRNA binding proteins, this protein initially binds near the 5'-end of the 23S rRNA. It is important during the early stages of 50S assembly. It makes multiple contacts with different domains of the 23S rRNA in the assembled 50S subunit and ribosome. Functionally, forms part of the polypeptide exit tunnel. This chain is Large ribosomal subunit protein uL4, found in Ureaplasma parvum serovar 3 (strain ATCC 27815 / 27 / NCTC 11736).